The sequence spans 537 residues: RNA polymerase sigma-54 factor 2 (537 aa).

The tract at residues alanine 52–glycine 90 is disordered. Residues glutamate 55–glycine 66 are compositionally biased toward low complexity. The H-T-H motif DNA-binding region spans asparagine 403 to threonine 422. An RPON box motif is present at residues alanine 492 to arginine 500. The tract at residues serine 507–alanine 537 is disordered. Residues alanine 518–serine 528 show a composition bias toward polar residues.

It belongs to the sigma-54 factor family.

Functionally, sigma factors are initiation factors that promote the attachment of RNA polymerase to specific initiation sites and are then released. This sigma factor is responsible for the expression of the nitrogen fixation genes. The protein is RNA polymerase sigma-54 factor 2 (rpoN2) of Bradyrhizobium diazoefficiens (strain JCM 10833 / BCRC 13528 / IAM 13628 / NBRC 14792 / USDA 110).